A 399-amino-acid chain; its full sequence is Dual-specificity RNA methyltransferase RlmN (399 aa).

The Proton acceptor role is filled by E116. The region spanning 122–352 (SEDRLTLCIS…VLLRRSMGRD (231 aa)) is the Radical SAM core domain. The cysteines at positions 129 and 357 are disulfide-linked. [4Fe-4S] cluster is bound by residues C136, C140, and C143. S-adenosyl-L-methionine contacts are provided by residues 185 to 186 (GE), S217, 238 to 240 (SLN), and N314. The S-methylcysteine intermediate role is filled by C357.

This sequence belongs to the radical SAM superfamily. RlmN family. [4Fe-4S] cluster is required as a cofactor.

It localises to the cytoplasm. It catalyses the reaction adenosine(2503) in 23S rRNA + 2 reduced [2Fe-2S]-[ferredoxin] + 2 S-adenosyl-L-methionine = 2-methyladenosine(2503) in 23S rRNA + 5'-deoxyadenosine + L-methionine + 2 oxidized [2Fe-2S]-[ferredoxin] + S-adenosyl-L-homocysteine. It carries out the reaction adenosine(37) in tRNA + 2 reduced [2Fe-2S]-[ferredoxin] + 2 S-adenosyl-L-methionine = 2-methyladenosine(37) in tRNA + 5'-deoxyadenosine + L-methionine + 2 oxidized [2Fe-2S]-[ferredoxin] + S-adenosyl-L-homocysteine. Its function is as follows. Specifically methylates position 2 of adenine 2503 in 23S rRNA and position 2 of adenine 37 in tRNAs. m2A2503 modification seems to play a crucial role in the proofreading step occurring at the peptidyl transferase center and thus would serve to optimize ribosomal fidelity. This chain is Dual-specificity RNA methyltransferase RlmN, found in Bdellovibrio bacteriovorus (strain ATCC 15356 / DSM 50701 / NCIMB 9529 / HD100).